We begin with the raw amino-acid sequence, 351 residues long: tRNA (guanine(10)-N2)-dimethyltransferase (351 aa).

Residues 57–165 (EGHRIIFRYN…ENTFFISNVL (109 aa)) enclose the THUMP domain.

This sequence belongs to the methyltransferase superfamily. Trm-G10 family. Monomer.

The protein resides in the cytoplasm. It catalyses the reaction guanosine(10) in tRNA + 2 S-adenosyl-L-methionine = N(2)-dimethylguanosine(10) in tRNA + 2 S-adenosyl-L-homocysteine + 2 H(+). Its function is as follows. Catalyzes the adenosylmethionine-dependent methylation of the exocyclic amino group (N(2)) of guanosine at position 10 of various tRNAs. Acts via a two-step process that leads to the formation of either N(2)-monomethyl (m(2)G) or N(2)-dimethylguanosine (m(2)(2)G). The sequence is that of tRNA (guanine(10)-N2)-dimethyltransferase (trmG10) from Methanocaldococcus jannaschii (strain ATCC 43067 / DSM 2661 / JAL-1 / JCM 10045 / NBRC 100440) (Methanococcus jannaschii).